The chain runs to 231 residues: Transcriptional regulator NRG1 (231 aa).

Ser163 bears the Phosphoserine mark. C2H2-type zinc fingers lie at residues 174–196 (YICK…NRIH) and 202–226 (HCCP…YRTH).

The protein localises to the nucleus. Functionally, transcriptional repressor involved in regulation of glucose repression. Binds to UAS-1 in the STA1 promoter. The chain is Transcriptional regulator NRG1 (NRG1) from Saccharomyces cerevisiae (strain ATCC 204508 / S288c) (Baker's yeast).